The primary structure comprises 213 residues: Thiopurine S-methyltransferase (213 aa).

S-adenosyl-L-methionine-binding residues include Trp10, Leu45, Glu66, and Arg121.

The protein belongs to the class I-like SAM-binding methyltransferase superfamily. TPMT family.

Its subcellular location is the cytoplasm. It carries out the reaction S-adenosyl-L-methionine + a thiopurine = S-adenosyl-L-homocysteine + a thiopurine S-methylether.. The protein is Thiopurine S-methyltransferase of Aliivibrio fischeri (strain ATCC 700601 / ES114) (Vibrio fischeri).